Consider the following 360-residue polypeptide: UDP-N-acetylglucosamine--N-acetylmuramyl-(pentapeptide) pyrophosphoryl-undecaprenol N-acetylglucosamine transferase (360 aa).

UDP-N-acetyl-alpha-D-glucosamine contacts are provided by residues 14–16, Asn-131, Arg-167, Ser-195, Ile-249, and Gln-294; that span reads TGG.

It belongs to the glycosyltransferase 28 family. MurG subfamily.

The protein resides in the cell inner membrane. The enzyme catalyses di-trans,octa-cis-undecaprenyl diphospho-N-acetyl-alpha-D-muramoyl-L-alanyl-D-glutamyl-meso-2,6-diaminopimeloyl-D-alanyl-D-alanine + UDP-N-acetyl-alpha-D-glucosamine = di-trans,octa-cis-undecaprenyl diphospho-[N-acetyl-alpha-D-glucosaminyl-(1-&gt;4)]-N-acetyl-alpha-D-muramoyl-L-alanyl-D-glutamyl-meso-2,6-diaminopimeloyl-D-alanyl-D-alanine + UDP + H(+). It participates in cell wall biogenesis; peptidoglycan biosynthesis. Its function is as follows. Cell wall formation. Catalyzes the transfer of a GlcNAc subunit on undecaprenyl-pyrophosphoryl-MurNAc-pentapeptide (lipid intermediate I) to form undecaprenyl-pyrophosphoryl-MurNAc-(pentapeptide)GlcNAc (lipid intermediate II). In Polaromonas naphthalenivorans (strain CJ2), this protein is UDP-N-acetylglucosamine--N-acetylmuramyl-(pentapeptide) pyrophosphoryl-undecaprenol N-acetylglucosamine transferase.